The sequence spans 564 residues: MSDKKLSDNERLKTQSNYLRGTIQDDLADPLTGGFVADNFQLIRFHGMYQQDDRDIRQERIAQKLEPLHTVMLRVRLPGGIITPHQWLGIDAFAREHTLYGSIRITNRQTVQLHGVLKDDIKPVHKLLNHLGLDSRATAGDVNRNVLCTANPVESVLHRQSWEWAKKISEHLLPRTNAYAEVWLDKEKIIQPDDEPILGKSYLPRKFKTAVVIPPQNDVDIHANDLSFVAIGDGDQLVGFNVLMGGGLAMTQGDTSTYPRLATEFGFIPLAHTLAIAEAVVSTQRDWGNRENRRNAKTKYTLERVGADVFKAEVERRSGVTFSPLKPYVFSERGDRIGWVEGIDGKYHLTLFIPSGRLLDKPGLPNKSGIAAIARVHNGDFRLTANQNIIIAGVASDDKAQIDALARQYGLLDSSLSSQRKDSMACVSFPTCPLAMAEAERVLPDVVSQIEHLLHKYGVGDESFVFRITGCPNGCGRAMLAEVGLIGRAVGRYSLYIGGNREGTRIPRLYKDNIDVPTLFDEIEKLIALWAKERNIGEGFGDFVIRAKIIMPVINAPVDFHTAV.

Cys-426, Cys-432, Cys-471, and Cys-475 together coordinate [4Fe-4S] cluster. Residue Cys-475 participates in siroheme binding.

The protein belongs to the nitrite and sulfite reductase 4Fe-4S domain family. As to quaternary structure, alpha(8)-beta(8). The alpha component is a flavoprotein, the beta component is a hemoprotein. Siroheme serves as cofactor. Requires [4Fe-4S] cluster as cofactor.

It catalyses the reaction hydrogen sulfide + 3 NADP(+) + 3 H2O = sulfite + 3 NADPH + 4 H(+). Its pathway is sulfur metabolism; hydrogen sulfide biosynthesis; hydrogen sulfide from sulfite (NADPH route): step 1/1. Functionally, component of the sulfite reductase complex that catalyzes the 6-electron reduction of sulfite to sulfide. This is one of several activities required for the biosynthesis of L-cysteine from sulfate. The polypeptide is Sulfite reductase [NADPH] hemoprotein beta-component 1 (Pectobacterium carotovorum subsp. carotovorum (strain PC1)).